The following is a 158-amino-acid chain: Transcriptional regulator MraZ (158 aa).

SpoVT-AbrB domains are found at residues 7–66 and 95–138; these read KEQH…EPSV and LDCV…APEK.

Belongs to the MraZ family. In terms of assembly, forms oligomers.

It localises to the cytoplasm. Its subcellular location is the nucleoid. The sequence is that of Transcriptional regulator MraZ from Prosthecochloris aestuarii (strain DSM 271 / SK 413).